Consider the following 115-residue polypeptide: Large ribosomal subunit protein P2 (115 aa).

At Met-1 the chain carries N-acetylmethionine. Phosphoserine occurs at positions 17 and 19. An N6-acetyllysine; alternate modification is found at Lys-21. Residue Lys-21 is modified to N6-succinyllysine; alternate. Residues 76–90 (APGSAAPAAGSAPAA) are compositionally biased toward low complexity. Positions 76–115 (APGSAAPAAGSAPAAAEEKKDEKKEESEESDDDMGFGLFD) are disordered. Phosphoserine occurs at positions 79 and 86. The span at 91 to 101 (AEEKKDEKKEE) shows a compositional bias: basic and acidic residues. Ser-102 and Ser-105 each carry phosphoserine.

This sequence belongs to the eukaryotic ribosomal protein P1/P2 family. Heterodimer with RPLP1 at the lateral ribosomal stalk of the large ribosomal subunit.

Functionally, plays an important role in the elongation step of protein synthesis. In Mus musculus (Mouse), this protein is Large ribosomal subunit protein P2 (Rplp2).